The sequence spans 286 residues: MTATILDGKATRDEIFEDLKVRVSALKDRGITPGLGTVLVGDDPGSAAYVRGKHNDCAKVGITSIRRDLPGDITQEKLDATIDELNANPDCTGYIVQLPLPKQLDENAALERIDPDKDADGLHPVNLGRLVLGKKAPLPCTPRGILHLLRRYEVPIEGAHVVVVGRGVTVGRPIGLLFTRRSENATVTLCHTRTRDLGAEVRRADIVIAAAGVPGLITADMVKPGAAVLDVGVSRTADGLRGDVAADVAEVAGFLSPNPGGVGPLTRAFLLTNVVERAERVAASLG.

NADP(+) is bound by residues 165 to 167, Thr-192, and Val-233; that span reads GRG.

It belongs to the tetrahydrofolate dehydrogenase/cyclohydrolase family. Homodimer.

The catalysed reaction is (6R)-5,10-methylene-5,6,7,8-tetrahydrofolate + NADP(+) = (6R)-5,10-methenyltetrahydrofolate + NADPH. The enzyme catalyses (6R)-5,10-methenyltetrahydrofolate + H2O = (6R)-10-formyltetrahydrofolate + H(+). Its pathway is one-carbon metabolism; tetrahydrofolate interconversion. Catalyzes the oxidation of 5,10-methylenetetrahydrofolate to 5,10-methenyltetrahydrofolate and then the hydrolysis of 5,10-methenyltetrahydrofolate to 10-formyltetrahydrofolate. The polypeptide is Bifunctional protein FolD 2 (Rhodococcus jostii (strain RHA1)).